The following is a 379-amino-acid chain: Flap endonuclease 1 (379 aa).

Positions 1 to 105 are N-domain; the sequence is MGVKGLNQLI…GELEKRLLRR (105 aa). Aspartate 34 contacts Mg(2+). Positions 47 and 71 each coordinate DNA. Mg(2+) is bound by residues aspartate 87, glutamate 159, glutamate 161, aspartate 180, and aspartate 182. Residues 123-254 form an I-domain region; it reads DMVRYEKRTV…VTAFKLIKEH (132 aa). Glutamate 159 contributes to the DNA binding site. Glycine 232 and aspartate 234 together coordinate DNA. Mg(2+) is bound at residue aspartate 234. The segment at 341–349 is interaction with PCNA; it reads VQGRLDGFF. The disordered stretch occupies residues 344–379; it reads RLDGFFQSVPKPKDSADKKRKNDTKSAKSKKAKTRK. A compositionally biased stretch (basic residues) spans 361 to 379; it reads KKRKNDTKSAKSKKAKTRK.

The protein belongs to the XPG/RAD2 endonuclease family. FEN1 subfamily. In terms of assembly, interacts with PCNA. Three molecules of FEN1 bind to one PCNA trimer with each molecule binding to one PCNA monomer. PCNA stimulates the nuclease activity without altering cleavage specificity. It depends on Mg(2+) as a cofactor. Post-translationally, phosphorylated. Phosphorylation upon DNA damage induces relocalization to the nuclear plasma.

The protein localises to the nucleus. Its subcellular location is the nucleolus. It localises to the nucleoplasm. It is found in the mitochondrion. Structure-specific nuclease with 5'-flap endonuclease and 5'-3' exonuclease activities involved in DNA replication and repair. During DNA replication, cleaves the 5'-overhanging flap structure that is generated by displacement synthesis when DNA polymerase encounters the 5'-end of a downstream Okazaki fragment. It enters the flap from the 5'-end and then tracks to cleave the flap base, leaving a nick for ligation. Also involved in the long patch base excision repair (LP-BER) pathway, by cleaving within the apurinic/apyrimidinic (AP) site-terminated flap. Acts as a genome stabilization factor that prevents flaps from equilibrating into structures that lead to duplications and deletions. Also possesses 5'-3' exonuclease activity on nicked or gapped double-stranded DNA, and exhibits RNase H activity. Also involved in replication and repair of rDNA and in repairing mitochondrial DNA. The protein is Flap endonuclease 1 of Debaryomyces hansenii (strain ATCC 36239 / CBS 767 / BCRC 21394 / JCM 1990 / NBRC 0083 / IGC 2968) (Yeast).